Reading from the N-terminus, the 453-residue chain is Cyclic GMP-AMP phosphodiesterase SMPDL3A (453 aa).

Residues 1–22 (MALVRALVCCLLTAWHCRSGLG) form the signal peptide. Positions 45 and 47 each coordinate Zn(2+). A disulfide bridge connects residues Cys62 and Cys81. Asn69 carries N-linked (GlcNAc...) asparagine glycosylation. Residue Asp110 coordinates Zn(2+). His114 serves as a coordination point for ATP. Asn131 carries N-linked (GlcNAc...) asparagine glycosylation. A Zn(2+)-binding site is contributed by Asn151. Residues Asn151 and His152 each contribute to the ATP site. 2 N-linked (GlcNAc...) asparagine glycosylation sites follow: Asn222 and Asn238. His252 is a Zn(2+) binding site. An N-linked (GlcNAc...) asparagine glycan is attached at Asn263. Residues His293 and His295 each coordinate Zn(2+). The N-linked (GlcNAc...) asparagine glycan is linked to Asn356. Intrachain disulfides connect Cys420-Cys424 and Cys430-Cys443. Asn437 carries an N-linked (GlcNAc...) asparagine glycan.

Belongs to the acid sphingomyelinase family. In terms of assembly, monomer. Homodimer; homodimerizes following 2',3'-cGAMP-binding. Requires Zn(2+) as cofactor. Post-translationally, N-glycosylation is required for protein maturation, secretion and phosphodiesterase activity. As to expression, detected in blood serum. Detected in macrophages (at protein level).

It is found in the secreted. It catalyses the reaction 2',3'-cGAMP + H2O = 5'-pGpA(2'-5') + H(+). It carries out the reaction 5'-pGpA(2'-5') + H2O = 5'-GpA(2'-5') + phosphate. The catalysed reaction is a ribonucleoside 5'-triphosphate + H2O = a ribonucleoside 5'-diphosphate + phosphate + H(+). The enzyme catalyses ATP + H2O = ADP + phosphate + H(+). Requires micromolar levels of Zn(2+) for activity. Inhibited by millimolar levels of Zn(2+). Its function is as follows. Cyclic-nucleotide phosphodiesterase that acts as a negative regulator of innate immunity by mediating degradation of 2',3'-cGAMP, thereby inhibiting the cGAS-STING signaling. Specifically linearizes 2',3'-cGAMP into 2'5'-bond pGpA and further hydrolyzes pGpA to produce GpA. Also has in vitro nucleotide phosphodiesterase activity with nucleoside triphosphates, such as ATP. Has in vitro activity with p-nitrophenyl-TMP. Has lower activity with nucleoside diphosphates, and no activity with nucleoside monophosphates. Has in vitro activity with CDP-choline, giving rise to CMP and phosphocholine. Has in vitro activity with CDP-ethanolamine. Does not have sphingomyelin phosphodiesterase activity. This is Cyclic GMP-AMP phosphodiesterase SMPDL3A from Homo sapiens (Human).